We begin with the raw amino-acid sequence, 86 residues long: RNA-binding protein Hfq (86 aa).

Residues 12-73 (DIFLNQVRKE…ISTITPQKPV (62 aa)) enclose the Sm domain.

The protein belongs to the Hfq family. As to quaternary structure, homohexamer.

Functionally, RNA chaperone that binds small regulatory RNA (sRNAs) and mRNAs to facilitate mRNA translational regulation in response to envelope stress, environmental stress and changes in metabolite concentrations. Also binds with high specificity to tRNAs. The sequence is that of RNA-binding protein Hfq from Thermoanaerobacter pseudethanolicus (strain ATCC 33223 / 39E) (Clostridium thermohydrosulfuricum).